The sequence spans 412 residues: Argininosuccinate synthase (412 aa).

8 to 16 (AYSGGLDTS) provides a ligand contact to ATP. Tyrosine 87 contacts L-citrulline. Residue glycine 117 coordinates ATP. Positions 119, 123, and 124 each coordinate L-aspartate. Asparagine 123 is an L-citrulline binding site. Arginine 127, serine 175, glutamate 259, and tyrosine 271 together coordinate L-citrulline.

It belongs to the argininosuccinate synthase family. Type 1 subfamily. As to quaternary structure, homotetramer.

The protein localises to the cytoplasm. The enzyme catalyses L-citrulline + L-aspartate + ATP = 2-(N(omega)-L-arginino)succinate + AMP + diphosphate + H(+). Its pathway is amino-acid biosynthesis; L-arginine biosynthesis; L-arginine from L-ornithine and carbamoyl phosphate: step 2/3. The chain is Argininosuccinate synthase from Clavibacter michiganensis subsp. michiganensis (strain NCPPB 382).